Consider the following 913-residue polypeptide: Calcium-activated chloride channel regulator 1 (913 aa).

Positions Met1–Ser21 are cleaved as a signal peptide. A metalloprotease domain region spans residues Asp46–Lys199. A Zn(2+)-binding site is contributed by His156. Glu157 is a catalytic residue. 2 residues coordinate Zn(2+): His160 and Asp167. One can recognise a VWFA domain in the interval Ile306 to Leu475. Asn503, Asn769, Asn803, Asn809, Asn830, Asn835, Asn885, and Asn889 each carry an N-linked (GlcNAc...) asparagine glycan. Residues Pro866–Asn885 form a disordered region.

This sequence belongs to the CLCR family. In terms of processing, glycosylated. The translation product is autoproteolytically cleaved by the metalloprotease domain in the endoplasmic reticulum into a N-terminal and a C-terminal products that remain physically associated with each other. The cleavage is necessary for calcium-activated chloride channel (CaCC) activation activity.

Its subcellular location is the secreted. It localises to the extracellular space. May be involved in mediating calcium-activated chloride conductance. May play critical roles in goblet cell metaplasia, mucus hypersecretion, cystic fibrosis and AHR. May be involved in the regulation of mucus production and/or secretion by goblet cells. Involved in the regulation of tissue inflammation in the innate immune response. May play a role as a tumor suppressor. Induces MUC5AC. This chain is Calcium-activated chloride channel regulator 1 (CLCA1), found in Macaca mulatta (Rhesus macaque).